The sequence spans 249 residues: Cysteine-rich secretory protein 1 (249 aa).

Positions 1 to 20 (MEIKHLLFLVAAACLLPVLS) are cleaved as a signal peptide. The SCP domain occupies 45 to 175 (VNIHNTLRRG…SPRYFYVCHY (131 aa)). Residue asparagine 104 is glycosylated (N-linked (GlcNAc...) asparagine). 5 cysteine pairs are disulfide-bonded: cysteine 195-cysteine 202, cysteine 198-cysteine 207, cysteine 211-cysteine 244, cysteine 220-cysteine 238, and cysteine 229-cysteine 242. Residues 211-244 (CIYYDEYTDCSLEVRFLGCNHSTPRMFCKATCLC) form the ShKT domain. N-linked (GlcNAc...) asparagine glycosylation occurs at asparagine 230.

Belongs to the CRISP family. In terms of tissue distribution, expressed in all the regions of the epididymis except the caput and is not detected in the testis, prostate, seminal vesicle, and brain.

In terms of biological role, may have a role in sperm-egg fusion and maturation. This chain is Cysteine-rich secretory protein 1 (CRISP1), found in Macaca mulatta (Rhesus macaque).